A 247-amino-acid polypeptide reads, in one-letter code: MKIDLNADLGEGCASDSALLQLVSSANIACGFHAGDAVLMQQCVREALKNGVAIGAHPSFPDRENFGRTAMQLPPETVYAQVLYQIGALAAIVHAQGGELRHVKPHGMLYNQAAKEPPLADAIARAVRDADADLVLVGLAGSELIRAGQHYQLTTRQEVFADRGYQADGSLVPRSQPGALIESEEQALAQTLEMVQHNRVRSLSGEWAHVKAETVCLHGDGAHALDFARRLRAAFAGRNIDVSADLE.

It belongs to the LamB/PxpA family. As to quaternary structure, forms a complex composed of PxpA, PxpB and PxpC.

It catalyses the reaction 5-oxo-L-proline + ATP + 2 H2O = L-glutamate + ADP + phosphate + H(+). Catalyzes the cleavage of 5-oxoproline to form L-glutamate coupled to the hydrolysis of ATP to ADP and inorganic phosphate. This chain is 5-oxoprolinase subunit A, found in Klebsiella pneumoniae subsp. pneumoniae (strain ATCC 700721 / MGH 78578).